A 122-amino-acid polypeptide reads, in one-letter code: UPF0102 protein TTE1452 (122 aa).

The protein belongs to the UPF0102 family.

The sequence is that of UPF0102 protein TTE1452 from Caldanaerobacter subterraneus subsp. tengcongensis (strain DSM 15242 / JCM 11007 / NBRC 100824 / MB4) (Thermoanaerobacter tengcongensis).